A 542-amino-acid chain; its full sequence is Mitogen-activated protein kinase 14 (542 aa).

The 292-residue stretch at 13–304 (YKIEEVIGKG…AEEALADPYF (292 aa)) folds into the Protein kinase domain. ATP-binding positions include 19 to 27 (IGKGSYGVV) and lysine 42. Aspartate 139 functions as the Proton acceptor in the catalytic mechanism. At threonine 175 the chain carries Phosphothreonine. Positions 175–177 (TDY) match the TXY motif. A Phosphotyrosine modification is found at tyrosine 177. Disordered regions lie at residues 388–412 (STAAPPERQHNSLPRPCVVYSDNRP) and 482–542 (RNPA…SGHW). The segment covering 488–507 (PNSSVPLGSSYPRRNQTCKS) has biased composition (polar residues).

It belongs to the protein kinase superfamily. CMGC Ser/Thr protein kinase family. MAP kinase subfamily. Dually phosphorylated on Thr-175 and Tyr-177, which activates the enzyme.

The enzyme catalyses L-seryl-[protein] + ATP = O-phospho-L-seryl-[protein] + ADP + H(+). It catalyses the reaction L-threonyl-[protein] + ATP = O-phospho-L-threonyl-[protein] + ADP + H(+). Its activity is regulated as follows. Activated by threonine and tyrosine phosphorylation. This is Mitogen-activated protein kinase 14 (MPK14) from Oryza sativa subsp. japonica (Rice).